The chain runs to 218 residues: Glutathione S-transferase Mu 1 (218 aa).

Residues 2–88 (PMILGYWDIR…YIARKHNLCG (87 aa)) form the GST N-terminal domain. 7–8 (YW) is a glutathione binding site. Position 34 is a phosphothreonine (T34). Residues 43–46 (RSQW), K50, 59–60 (NL), and 72–73 (QS) each bind glutathione. The 119-residue stretch at 90 to 208 (TEEEKIRVDI…KSSRFLPRPV (119 aa)) folds into the GST C-terminal domain. Y116 lines the substrate pocket. S210 is subject to Phosphoserine.

It belongs to the GST superfamily. Mu family. In terms of assembly, homodimer. Liver (at protein level).

The protein localises to the cytoplasm. It catalyses the reaction RX + glutathione = an S-substituted glutathione + a halide anion + H(+). The enzyme catalyses prostaglandin A2 + glutathione = prostaglandin A2-S-(R)-glutathione. The catalysed reaction is prostaglandin J2 + glutathione = prostaglandin J2-S-(R)-glutathione. It carries out the reaction prostaglandin J2 + glutathione = prostaglandin J2-S-(S)-glutathione. It catalyses the reaction prostaglandin A2 + glutathione = prostaglandin A2-S-(S)-glutathione. The enzyme catalyses 11(S)-hydroxy-14(S),15(S)-epoxy-(5Z,8Z,12E)-eicosatrienoate + glutathione = (11S,15S)-dihydroxy-14(R)-S-glutathionyl-(5Z,8Z,12E)-eicosatrienoate. In terms of biological role, conjugation of reduced glutathione to a wide number of exogenous and endogenous hydrophobic electrophiles. Involved in the formation of glutathione conjugates of both prostaglandin A2 (PGA2) and prostaglandin J2 (PGJ2). Participates in the formation of novel hepoxilin regioisomers. The sequence is that of Glutathione S-transferase Mu 1 from Homo sapiens (Human).